The primary structure comprises 147 residues: MPDSMSHQMIMAFDFGTQKMGIAIGQAAIESSTPLALFPMKDGIPDWNQLLKIVKEWQPTLFLVGLPLNMDDSESELSARARKFARRLRHQTNITTWMVDERLTTREARDELESYQEQGRAKKIAADSIAASLLIQSWYRAPQGVQP.

The protein belongs to the YqgF nuclease family.

The protein resides in the cytoplasm. In terms of biological role, could be a nuclease involved in processing of the 5'-end of pre-16S rRNA. This chain is Putative pre-16S rRNA nuclease, found in Acinetobacter baylyi (strain ATCC 33305 / BD413 / ADP1).